Reading from the N-terminus, the 149-residue chain is Nucleoside diphosphate kinase (149 aa).

6 residues coordinate ATP: Lys9, Phe57, Arg85, Thr91, Arg102, and Asn112. Catalysis depends on His115, which acts as the Pros-phosphohistidine intermediate.

The protein belongs to the NDK family. As to quaternary structure, homotetramer. Mg(2+) is required as a cofactor.

It localises to the cytoplasm. It carries out the reaction a 2'-deoxyribonucleoside 5'-diphosphate + ATP = a 2'-deoxyribonucleoside 5'-triphosphate + ADP. It catalyses the reaction a ribonucleoside 5'-diphosphate + ATP = a ribonucleoside 5'-triphosphate + ADP. Functionally, major role in the synthesis of nucleoside triphosphates other than ATP. The ATP gamma phosphate is transferred to the NDP beta phosphate via a ping-pong mechanism, using a phosphorylated active-site intermediate. The protein is Nucleoside diphosphate kinase of Staphylococcus haemolyticus (strain JCSC1435).